Consider the following 238-residue polypeptide: Probable phosphatase phospho2 (238 aa).

Asp8 functions as the Nucleophile in the catalytic mechanism. Mg(2+)-binding residues include Asp8 and Asp10. Asp10 functions as the Proton donor in the catalytic mechanism. Substrate is bound by residues Asp19 and Asp99. Asp179 provides a ligand contact to Mg(2+).

It belongs to the HAD-like hydrolase superfamily. PHOSPHO family. Mg(2+) is required as a cofactor.

Its function is as follows. Probable phosphatase. The sequence is that of Probable phosphatase phospho2 (phospho2) from Xenopus tropicalis (Western clawed frog).